The sequence spans 186 residues: Large ribosomal subunit protein uL5 (186 aa).

Belongs to the universal ribosomal protein uL5 family. Part of the 50S ribosomal subunit; part of the 5S rRNA/L5/L18/L25 subcomplex. Contacts the 5S rRNA and the P site tRNA. Forms a bridge to the 30S subunit in the 70S ribosome.

This is one of the proteins that bind and probably mediate the attachment of the 5S RNA into the large ribosomal subunit, where it forms part of the central protuberance. In the 70S ribosome it contacts protein S13 of the 30S subunit (bridge B1b), connecting the 2 subunits; this bridge is implicated in subunit movement. Contacts the P site tRNA; the 5S rRNA and some of its associated proteins might help stabilize positioning of ribosome-bound tRNAs. The chain is Large ribosomal subunit protein uL5 from Jannaschia sp. (strain CCS1).